Reading from the N-terminus, the 292-residue chain is F-box only protein 16 (292 aa).

An F-box domain is found at 86-132 (LDFTTKLPRVLSLYIFSFLDPRSLCRCAQVCWHWKNLAELDQLWMLK). 2 disordered regions span residues 188–224 (SPEEKQSPLSAFRSSSSLRKKNNSGEKALPPWRSSDK) and 238–292 (RDPM…PLCP). The segment covering 194 to 204 (SPLSAFRSSSS) has biased composition (low complexity). Over residues 260–273 (RQSHDKKNKLQDRT) the composition is skewed to basic and acidic residues.

As to quaternary structure, part of a SCF (SKP1-cullin-F-box) protein ligase complex. Expressed in heart, spleen and colon.

Probably recognizes and binds to some phosphorylated proteins and promotes their ubiquitination and degradation. The chain is F-box only protein 16 (FBXO16) from Homo sapiens (Human).